A 197-amino-acid polypeptide reads, in one-letter code: 3-isopropylmalate dehydratase small subunit (197 aa).

The protein belongs to the LeuD family. LeuD type 1 subfamily. As to quaternary structure, heterodimer of LeuC and LeuD.

The catalysed reaction is (2R,3S)-3-isopropylmalate = (2S)-2-isopropylmalate. Its pathway is amino-acid biosynthesis; L-leucine biosynthesis; L-leucine from 3-methyl-2-oxobutanoate: step 2/4. Functionally, catalyzes the isomerization between 2-isopropylmalate and 3-isopropylmalate, via the formation of 2-isopropylmaleate. This Geobacillus kaustophilus (strain HTA426) protein is 3-isopropylmalate dehydratase small subunit.